Consider the following 283-residue polypeptide: Pantothenate synthetase (283 aa).

Residue 30–37 (MGALHEGH) coordinates ATP. His-37 serves as the catalytic Proton donor. A (R)-pantoate-binding site is contributed by Gln-61. Gln-61 contributes to the beta-alanine binding site. Position 147–150 (147–150 (GEKD)) interacts with ATP. Gln-153 is a (R)-pantoate binding site. ATP contacts are provided by residues Ile-176 and 184 to 187 (VSSR).

This sequence belongs to the pantothenate synthetase family. In terms of assembly, homodimer.

It localises to the cytoplasm. The enzyme catalyses (R)-pantoate + beta-alanine + ATP = (R)-pantothenate + AMP + diphosphate + H(+). It functions in the pathway cofactor biosynthesis; (R)-pantothenate biosynthesis; (R)-pantothenate from (R)-pantoate and beta-alanine: step 1/1. Catalyzes the condensation of pantoate with beta-alanine in an ATP-dependent reaction via a pantoyl-adenylate intermediate. This chain is Pantothenate synthetase, found in Pelodictyon phaeoclathratiforme (strain DSM 5477 / BU-1).